The sequence spans 341 residues: Heme A synthase (341 aa).

The next 8 membrane-spanning stretches (helical) occupy residues 7 to 27 (VTVW…IGGI), 92 to 112 (LFGR…AITK), 118 to 138 (MVAK…MGWF), 159 to 179 (LFLT…CAGV), 190 to 210 (FFTA…GALV), 253 to 273 (FLHR…PFWL), 280 to 300 (LFLA…VSVV), and 302 to 322 (IFLA…GVHM). Position 255 (histidine 255) interacts with heme. Histidine 308 lines the heme pocket.

Belongs to the COX15/CtaA family. Type 2 subfamily. As to quaternary structure, interacts with CtaB. It depends on heme b as a cofactor.

It localises to the cell membrane. It carries out the reaction Fe(II)-heme o + 2 A + H2O = Fe(II)-heme a + 2 AH2. It functions in the pathway porphyrin-containing compound metabolism; heme A biosynthesis; heme A from heme O: step 1/1. Functionally, catalyzes the conversion of heme O to heme A by two successive hydroxylations of the methyl group at C8. The first hydroxylation forms heme I, the second hydroxylation results in an unstable dihydroxymethyl group, which spontaneously dehydrates, resulting in the formyl group of heme A. This is Heme A synthase from Anaplasma marginale (strain St. Maries).